A 391-amino-acid chain; its full sequence is MTNNTKTITLNLGPQHPATHGVLRLILEMDGEVVNNADPHIGLLHRGTEKLIEHKTYLQAIPYFDRLDYVSPMCQEHAFALAVESLLECEVPRRAQFIRVLFSELTRILNHTLNIGSQALDIGATTPLLWLFEEREKIMEFYEHVSGSRMHSNYFRPGGVVADLPEGLLEDIDKFIEQFPPKLHDIESLLNENRLWKQRLVDIGVVSQKEAMDWGFSGPMLRGSGIAWDLRKSNPYDVYDEMDFKVPIGKNGDCYDRYFVRMLEMYESIKIIKQCIEKMPKGAIKTDDPKLTPPTRAKMKESMEAMIHHFKLYTEGYDVPAGETYKAVEAPKGEFGVYLYSRGGNRPYRCRIKAPGFAHLQGLDFMSQGHLMADVITIIATLDIVFGEIDR.

It belongs to the complex I 49 kDa subunit family. In terms of assembly, NDH-1 is composed of 14 different subunits. Subunits NuoB, C, D, E, F, and G constitute the peripheral sector of the complex.

It localises to the cell inner membrane. It catalyses the reaction a quinone + NADH + 5 H(+)(in) = a quinol + NAD(+) + 4 H(+)(out). NDH-1 shuttles electrons from NADH, via FMN and iron-sulfur (Fe-S) centers, to quinones in the respiratory chain. The immediate electron acceptor for the enzyme in this species is believed to be ubiquinone. Couples the redox reaction to proton translocation (for every two electrons transferred, four hydrogen ions are translocated across the cytoplasmic membrane), and thus conserves the redox energy in a proton gradient. This chain is NADH-quinone oxidoreductase subunit D, found in Rickettsia rickettsii (strain Iowa).